A 401-amino-acid chain; its full sequence is MRCDRVWINARLATLAPGRQGLGIVEDGVVACLGGRIAYAGPAAAAPTFEAAESIDVDGRWITPGLIDPHTHLVFAGDRAHEFELRLAGASYEEIARAGGGIVSTMRATRAASEAELIAAALPRLDALLAEGVTTVEIKSGYGLSLDDELKSLRAARALADIRRVGVTTTFLGAHALPPEYRDDEDGYVDLVCQTMIPAIAARGLADAVDGFCEGIGFSPAQIRRVFDAAKAHGLPVKLHAEQLSNLSGAALAAEYNALSADHLEHLDAAGIAAMAASGTVATLLPGAYYFTRETLVPPIAALRAAGVPMALATDCNPGTSPLTSPLLVMNMAATLFRMTVEECLAGVTREAARALGLLADRGTLEAGKACDLAIWDVERPAELVYRMGFNPLHARVWRGL.

His-70 and His-72 together coordinate Fe(3+). Zn(2+) is bound by residues His-70 and His-72. 4-imidazolone-5-propanoate-binding residues include Arg-79, Tyr-142, and His-175. Position 142 (Tyr-142) interacts with N-formimidoyl-L-glutamate. His-240 is a Fe(3+) binding site. His-240 lines the Zn(2+) pocket. Gln-243 is a binding site for 4-imidazolone-5-propanoate. Fe(3+) is bound at residue Asp-315. Asp-315 is a binding site for Zn(2+). Residues Asn-317 and Gly-319 each contribute to the N-formimidoyl-L-glutamate site. Thr-320 is a 4-imidazolone-5-propanoate binding site.

It belongs to the metallo-dependent hydrolases superfamily. HutI family. Zn(2+) serves as cofactor. Requires Fe(3+) as cofactor.

It is found in the cytoplasm. It catalyses the reaction 4-imidazolone-5-propanoate + H2O = N-formimidoyl-L-glutamate. It functions in the pathway amino-acid degradation; L-histidine degradation into L-glutamate; N-formimidoyl-L-glutamate from L-histidine: step 3/3. Catalyzes the hydrolytic cleavage of the carbon-nitrogen bond in imidazolone-5-propanoate to yield N-formimidoyl-L-glutamate. It is the third step in the universal histidine degradation pathway. This Caulobacter vibrioides (strain ATCC 19089 / CIP 103742 / CB 15) (Caulobacter crescentus) protein is Imidazolonepropionase.